A 337-amino-acid polypeptide reads, in one-letter code: Glyceraldehyde-3-phosphate dehydrogenase, cytosolic (337 aa).

NAD(+)-binding positions include 13 to 14 (RI), aspartate 35, and arginine 82. D-glyceraldehyde 3-phosphate-binding positions include 153-155 (SCT), threonine 184, 213-214 (TG), and arginine 236. The active-site Nucleophile is cysteine 154. An NAD(+)-binding site is contributed by asparagine 318.

Belongs to the glyceraldehyde-3-phosphate dehydrogenase family. In terms of assembly, homotetramer.

It is found in the cytoplasm. It carries out the reaction D-glyceraldehyde 3-phosphate + phosphate + NAD(+) = (2R)-3-phospho-glyceroyl phosphate + NADH + H(+). The protein operates within carbohydrate degradation; glycolysis; pyruvate from D-glyceraldehyde 3-phosphate: step 1/5. Key enzyme in glycolysis that catalyzes the first step of the pathway by converting D-glyceraldehyde 3-phosphate (G3P) into 3-phospho-D-glyceroyl phosphate. Essential for the maintenance of cellular ATP levels and carbohydrate metabolism. The polypeptide is Glyceraldehyde-3-phosphate dehydrogenase, cytosolic (GAPC) (Antirrhinum majus (Garden snapdragon)).